The chain runs to 24 residues: FMGGLIKAATKALPAAFCAITKKC.

A disulfide bridge links Cys-18 with Cys-24.

As to expression, expressed by the skin glands.

The protein resides in the secreted. Functionally, has antibacterial activity against the Gram-positive bacterium S.aureus ATCC 25923 and the Gram-negative bacterium E.coli ATCC 25726. This is Brevinin-1PTb from Pulchrana picturata (Malaysian fire frog).